A 400-amino-acid chain; its full sequence is CCA-adding enzyme (400 aa).

ATP is bound by residues glycine 28 and arginine 31. Residues glycine 28 and arginine 31 each coordinate CTP. Mg(2+) is bound by residues aspartate 41 and aspartate 43. ATP contacts are provided by arginine 112, aspartate 155, arginine 158, arginine 161, and arginine 164. 5 residues coordinate CTP: arginine 112, aspartate 155, arginine 158, arginine 161, and arginine 164.

It belongs to the tRNA nucleotidyltransferase/poly(A) polymerase family. Bacterial CCA-adding enzyme type 3 subfamily. In terms of assembly, homodimer. It depends on Mg(2+) as a cofactor.

The enzyme catalyses a tRNA precursor + 2 CTP + ATP = a tRNA with a 3' CCA end + 3 diphosphate. It carries out the reaction a tRNA with a 3' CCA end + 2 CTP + ATP = a tRNA with a 3' CCACCA end + 3 diphosphate. Catalyzes the addition and repair of the essential 3'-terminal CCA sequence in tRNAs without using a nucleic acid template. Adds these three nucleotides in the order of C, C, and A to the tRNA nucleotide-73, using CTP and ATP as substrates and producing inorganic pyrophosphate. tRNA 3'-terminal CCA addition is required both for tRNA processing and repair. Also involved in tRNA surveillance by mediating tandem CCA addition to generate a CCACCA at the 3' terminus of unstable tRNAs. While stable tRNAs receive only 3'-terminal CCA, unstable tRNAs are marked with CCACCA and rapidly degraded. The protein is CCA-adding enzyme of Staphylococcus haemolyticus (strain JCSC1435).